A 117-amino-acid chain; its full sequence is MRGLLYLALAIVSEVFGSTMLKLSEGFTQAWPIAGVIVGFLSAFTFLSFSLKTIDLSSAYATWSGVGTALTAIVGFLLFGETISLKGVFGLTLVIAGVVVLNQSKAHAEDKKQTACE.

4 helical membrane-spanning segments follow: residues 3-23, 31-51, 59-79, and 81-101; these read GLLY…MLKL, WPIA…SFSL, AYAT…FLLF, and ETIS…VVVL.

It belongs to the drug/metabolite transporter (DMT) superfamily. Small multidrug resistance (SMR) (TC 2.A.7.1) family. EbrA/EbrB subfamily. In terms of assembly, the efflux pump is composed of EbrA and EbrB.

Its subcellular location is the cell membrane. Functionally, part of a multidrug efflux pump. Confers resistance to cationic lipophilic dyes such as ethidium bromide, acriflavine, pyronine Y and safranin O. The efflux is probably coupled to an influx of protons. This is Multidrug resistance protein EbrB (ebrB) from Bacillus subtilis (strain 168).